Reading from the N-terminus, the 396-residue chain is Cell adhesion molecule 3 (396 aa).

Positions 1–22 (MGAPSALPLLLLLACSWAPGGA) are cleaved as a signal peptide. The Ig-like V-type domain occupies 23–124 (NLSQDDSQPW…VRTAKSLVTV (102 aa)). The Extracellular portion of the chain corresponds to 23 to 328 (NLSQDDSQPW…PVPSSSSTYH (306 aa)). 3 disulfides stabilise this stretch: C48/C108, C150/C207, and C252/C297. Ig-like C2-type domains are found at residues 128-226 (PQKP…QRIE) and 231-313 (PTAM…FTLN). N288 carries an N-linked (GlcNAc...) asparagine glycan. The helical transmembrane segment at 329 to 349 (AIIGGIVAFIVFLLLILLIFL) threads the bilayer. Residues 350–396 (GHYLIRHKGTYLTHEAKGSDDAPDADTAIINAEGGQSGGDDKKEYFI) lie on the Cytoplasmic side of the membrane. The tract at residues 365-396 (AKGSDDAPDADTAIINAEGGQSGGDDKKEYFI) is disordered. The residue at position 386 (S386) is a Phosphoserine.

Belongs to the nectin family. As to quaternary structure, homodimer. Can form trans-heterodimers with NECTIN3. Interacts with EPB41L1, DLG3, PALS2 and CASK. In terms of tissue distribution, mainly expressed in brain, in neuronal cell bodies of cerebellum, cortex, hippocampus, hypothalamus and spinal cord. In spinal cord predominantly expressed in motor neurons. Expressed in axons, presynaptic nerve terminals, glia cell processes.

It localises to the cell membrane. The protein resides in the cell junction. Its function is as follows. Involved in cell-cell adhesion. Has both calcium-independent homophilic cell-cell adhesion activity and calcium-independent heterophilic cell-cell adhesion activity with IGSF4, NECTIN1 and NECTIN3. Interaction with EPB41L1 may regulate structure or function of cell-cell junctions. In Mus musculus (Mouse), this protein is Cell adhesion molecule 3 (Cadm3).